The sequence spans 473 residues: Photosystem II CP43 reaction center protein (473 aa).

The propeptide occupies 1-14 (MKTLYSPRRFYPVE). T15 carries the N-acetylthreonine modification. Position 15 is a phosphothreonine (T15). Helical transmembrane passes span 69 to 93 (LFEV…PHLA), 134 to 155 (LIGP…KDRN), 178 to 200 (KALF…RKIT), 255 to 275 (KPFA…LSYS), and 291 to 312 (WFNN…ASQA). E367 contributes to the [CaMn4O5] cluster binding site. A helical transmembrane segment spans residues 447–471 (RARAAAAGFEKGIDRDLEPVLFMTP).

The protein belongs to the PsbB/PsbC family. PsbC subfamily. PSII is composed of 1 copy each of membrane proteins PsbA, PsbB, PsbC, PsbD, PsbE, PsbF, PsbH, PsbI, PsbJ, PsbK, PsbL, PsbM, PsbT, PsbX, PsbY, PsbZ, Psb30/Ycf12, at least 3 peripheral proteins of the oxygen-evolving complex and a large number of cofactors. It forms dimeric complexes. The cofactor is Binds multiple chlorophylls and provides some of the ligands for the Ca-4Mn-5O cluster of the oxygen-evolving complex. It may also provide a ligand for a Cl- that is required for oxygen evolution. PSII binds additional chlorophylls, carotenoids and specific lipids..

The protein resides in the plastid. It localises to the chloroplast thylakoid membrane. Functionally, one of the components of the core complex of photosystem II (PSII). It binds chlorophyll and helps catalyze the primary light-induced photochemical processes of PSII. PSII is a light-driven water:plastoquinone oxidoreductase, using light energy to abstract electrons from H(2)O, generating O(2) and a proton gradient subsequently used for ATP formation. The protein is Photosystem II CP43 reaction center protein of Welwitschia mirabilis (Tree tumbo).